The sequence spans 231 residues: UPF0758 protein YsxA (231 aa).

An MPN domain is found at 109 to 231; that stretch reads VIRSPEDGAN…FVSLKEKGYL (123 aa). 3 residues coordinate Zn(2+): His180, His182, and Asp193. Positions 180–193 match the JAMM motif motif; the sequence is HNHPSGDPTPSRED.

It belongs to the UPF0758 family.

The polypeptide is UPF0758 protein YsxA (ysxA) (Bacillus subtilis (strain 168)).